A 255-amino-acid polypeptide reads, in one-letter code: MSDIGNFVSRIYESKLLEEIKKHPVPGHLGIITDGNRRYARSIGISENEGHVKGKEKLEEVLNWSMEVGIHMVTVYAFSTENFKRKSDEVNFLFNLINDAFIDLLNDERVYKNGIRVKVIGDISKLPDYLKETIKRVEGETNKFKNFRFNLAIGYGGRQEIIDAIKKIGQDILNGKIKVDNINEEMFRSYLYDKTLPDPDLILRTSGEERISNFLLWQSAYSELYFADVNWPELRKIDFLRAIYSYQNRKRRFGE.

The active site involves Asp34. Asp34 serves as a coordination point for Mg(2+). Substrate contacts are provided by residues 35–38 (GNRR), His51, and 79–81 (STE). Asn82 acts as the Proton acceptor in catalysis. Residues Phe83, Arg85, Arg204, and 210–212 (RIS) contribute to the substrate site. Residue Glu223 coordinates Mg(2+).

Belongs to the UPP synthase family. As to quaternary structure, homodimer. Requires Mg(2+) as cofactor.

The catalysed reaction is geranylgeranyl diphosphate + 7 isopentenyl diphosphate = tri-trans,hepta-cis-undecaprenyl diphosphate + 7 diphosphate. Its function is as follows. Catalyzes the sequential condensation of isopentenyl diphosphate (IPP) with geranylgeranyl diphosphate (GGPP) to yield (2Z,6Z,10Z,14Z,18Z,22Z,26Z,30E,34E,38E)-undecaprenyl diphosphate (tritrans,heptacis-UPP). It is probably the precursor of glycosyl carrier lipids. The sequence is that of Tritrans,polycis-undecaprenyl-diphosphate synthase (geranylgeranyl-diphosphate specific) from Picrophilus torridus (strain ATCC 700027 / DSM 9790 / JCM 10055 / NBRC 100828 / KAW 2/3).